The sequence spans 153 residues: Ribonuclease 2 (153 aa).

It belongs to the BetVI family.

The protein localises to the cytoplasm. Its function is as follows. Catalyzes the two-stage endonucleolytic cleavage to 3'-phosphomononucleotides and 3'-phosphooligonucleotides with 2',3'-cyclic phosphate intermediates. This Panax ginseng (Korean ginseng) protein is Ribonuclease 2.